We begin with the raw amino-acid sequence, 2195 residues long: Genome polyprotein (2195 aa).

Glycine 2 carries the N-myristoyl glycine; by host lipid modification. Topologically, residues glycine 2–glutamine 1505 are cytoplasmic. Positions leucine 567–valine 583 are amphipathic alpha-helix. Residues histidine 882 and aspartate 900 each act as for protease 2A activity in the active site. Zn(2+) contacts are provided by cysteine 917 and cysteine 919. Cysteine 971 (for protease 2A activity) is an active-site residue. Positions 977 and 979 each coordinate Zn(2+). The segment at asparagine 1111–glutamine 1183 is membrane-binding. An oligomerization region spans residues asparagine 1111 to threonine 1249. The tract at residues serine 1132–glutamine 1136 is RNA-binding. In terms of domain architecture, SF3 helicase spans glutamate 1215–asparagine 1371. Zn(2+) is bound by residues cysteine 1379, cysteine 1391, and cysteine 1396. Residues cysteine 1379–cysteine 1396 form a C4-type; degenerate zinc finger. Positions glutamate 1423 to valine 1430 are RNA-binding. Residues leucine 1434–glutamine 1439 are oligomerization. The stretch at alanine 1506–tyrosine 1521 is an intramembrane region. Residues lysine 1522–phenylalanine 2195 lie on the Cytoplasmic side of the membrane. At tyrosine 1531 the chain carries O-(5'-phospho-RNA)-tyrosine. One can recognise a Peptidase C3 domain in the interval glycine 1551–phenylalanine 1729. Active-site for protease 3C activity residues include histidine 1590, glutamate 1621, and cysteine 1697. In terms of domain architecture, RdRp catalytic spans glycine 1960 to leucine 2076. 2 residues coordinate Mg(2+): aspartate 1966 and aspartate 2062.

Belongs to the picornaviruses polyprotein family. In terms of assembly, interacts with capsid protein VP1 and capsid protein VP3 to form heterotrimeric protomers. As to quaternary structure, interacts with capsid protein VP0, and capsid protein VP3 to form heterotrimeric protomers. Five protomers subsequently associate to form pentamers which serve as building blocks for the capsid. Interacts with capsid protein VP2, capsid protein VP3 and capsid protein VP4 following cleavage of capsid protein VP0. Interacts with capsid protein VP1 and capsid protein VP3 in the mature capsid. In terms of assembly, interacts with capsid protein VP0 and capsid protein VP1 to form heterotrimeric protomers. Five protomers subsequently associate to form pentamers which serve as building blocks for the capsid. Interacts with capsid protein VP4 in the mature capsid. Interacts with protein 2C; this interaction may be important for virion morphogenesis. As to quaternary structure, interacts with capsid protein VP1 and capsid protein VP3. Homodimer. In terms of assembly, homohexamer; forms a hexameric ring structure with 6-fold symmetry characteristic of AAA+ ATPases. Interacts (via N-terminus) with host RTN3 (via reticulon domain); this interaction is important for viral replication. Interacts with capsid protein VP3; this interaction may be important for virion morphogenesis. As to quaternary structure, interacts with protein 3CD. Homodimer. Interacts with host GBF1. Interacts (via GOLD domain) with host ACBD3 (via GOLD domain); this interaction allows the formation of a viral protein 3A/ACBD3 heterotetramer with a 2:2 stoichiometry, which will stimulate the recruitment of host PI4KB in order to synthesize PI4P at the viral RNA replication sites. In terms of assembly, interacts with RNA-directed RNA polymerase. As to quaternary structure, interacts with protein 3AB and with RNA-directed RNA polymerase. Interacts with Viral protein genome-linked and with protein 3CD. Requires Mg(2+) as cofactor. Specific enzymatic cleavages in vivo by the viral proteases yield processing intermediates and the mature proteins. Post-translationally, myristoylation is required for the formation of pentamers during virus assembly. Further assembly of 12 pentamers and a molecule of genomic RNA generates the provirion. In terms of processing, during virion maturation, immature virions are rendered infectious following cleavage of VP0 into VP4 and VP2. This maturation seems to be an autocatalytic event triggered by the presence of RNA in the capsid and it is followed by a conformational change infectious virion. Myristoylation is required during RNA encapsidation and formation of the mature virus particle. Post-translationally, VPg is uridylylated by the polymerase into VPg-pUpU. This acts as a nucleotide-peptide primer for the genomic RNA replication.

The protein resides in the virion. It localises to the host cytoplasm. Its subcellular location is the host cytoplasmic vesicle membrane. The protein localises to the host nucleus. The catalysed reaction is a ribonucleoside 5'-triphosphate + H2O = a ribonucleoside 5'-diphosphate + phosphate + H(+). It catalyses the reaction Selective cleavage of Tyr-|-Gly bond in the picornavirus polyprotein.. The enzyme catalyses RNA(n) + a ribonucleoside 5'-triphosphate = RNA(n+1) + diphosphate. It carries out the reaction Selective cleavage of Gln-|-Gly bond in the poliovirus polyprotein. In other picornavirus reactions Glu may be substituted for Gln, and Ser or Thr for Gly.. Its activity is regulated as follows. Replication or transcription is subject to high level of random mutations by the nucleotide analog ribavirin. Its function is as follows. Forms an icosahedral capsid of pseudo T=3 symmetry with capsid proteins VP2 and VP3. The capsid is 300 Angstroms in diameter, composed of 60 copies of each capsid protein and enclosing the viral positive strand RNA genome. Capsid protein VP1 mainly forms the vertices of the capsid. Capsid protein VP1 interacts with host cell receptor to provide virion attachment to target host cells. This attachment induces virion internalization. Tyrosine kinases are probably involved in the entry process. After binding to its receptor, the capsid undergoes conformational changes. Capsid protein VP1 N-terminus (that contains an amphipathic alpha-helix) and capsid protein VP4 are externalized. Together, they shape a pore in the host membrane through which viral genome is translocated to host cell cytoplasm. In terms of biological role, forms an icosahedral capsid of pseudo T=3 symmetry with capsid proteins VP2 and VP3. The capsid is 300 Angstroms in diameter, composed of 60 copies of each capsid protein and enclosing the viral positive strand RNA genome. Functionally, lies on the inner surface of the capsid shell. After binding to the host receptor, the capsid undergoes conformational changes. Capsid protein VP4 is released, Capsid protein VP1 N-terminus is externalized, and together, they shape a pore in the host membrane through which the viral genome is translocated into the host cell cytoplasm. Component of immature procapsids, which is cleaved into capsid proteins VP4 and VP2 after maturation. Allows the capsid to remain inactive before the maturation step. Its function is as follows. Cysteine protease that cleaves viral polyprotein and specific host proteins. It is responsible for the autocatalytic cleavage between the P1 and P2 regions, which is the first cleavage occurring in the polyprotein. Also cleaves the host translation initiation factor EIF4G1, in order to shut down the capped cellular mRNA translation. Inhibits the host nucleus-cytoplasm protein and RNA trafficking by cleaving host members of the nuclear pores. Counteracts stress granule formation probably by antagonizing its assembly or promoting its dissassembly. In terms of biological role, plays an essential role in the virus replication cycle by acting as a viroporin. Creates a pore in the host endoplasmic reticulum and as a consequence releases Ca2+ in the cytoplasm of infected cell. In turn, high levels of cytoplasmic calcium may trigger membrane trafficking and transport of viral ER-associated proteins to viroplasms, sites of viral genome replication. Functionally, induces and associates with structural rearrangements of intracellular membranes. Displays RNA-binding, nucleotide binding and NTPase activities. May play a role in virion morphogenesis and viral RNA encapsidation by interacting with the capsid protein VP3. Localizes the viral replication complex to the surface of membranous vesicles. Together with protein 3CD binds the Cis-Active RNA Element (CRE) which is involved in RNA synthesis initiation. Acts as a cofactor to stimulate the activity of 3D polymerase, maybe through a nucleid acid chaperone activity. Its function is as follows. Localizes the viral replication complex to the surface of membranous vesicles. It inhibits host cell endoplasmic reticulum-to-Golgi apparatus transport and causes the disassembly of the Golgi complex, possibly through GBF1 interaction. This would result in depletion of MHC, trail receptors and IFN receptors at the host cell surface. Plays an essential role in viral RNA replication by recruiting ACBD3 and PI4KB at the viral replication sites, thereby allowing the formation of the rearranged membranous structures where viral replication takes place. In terms of biological role, acts as a primer for viral RNA replication and remains covalently bound to viral genomic RNA. VPg is uridylylated prior to priming replication into VPg-pUpU. The oriI viral genomic sequence may act as a template for this. The VPg-pUpU is then used as primer on the genomic RNA poly(A) by the RNA-dependent RNA polymerase to replicate the viral genome. During genome replication, the VPg-RNA linkage is removed by the host TDP2, thereby accelerating replication. During the late stage of the replication cycle, host TDP2 is excluded from sites of viral RNA synthesis and encapsidation, allowing for the generation of progeny virions. Functionally, involved in the viral replication complex and viral polypeptide maturation. It exhibits protease activity with a specificity and catalytic efficiency that is different from protease 3C. Protein 3CD lacks polymerase activity. The 3C domain in the context of protein 3CD may have an RNA binding activity. Protein 3CD binds to the 5'UTR of the viral genome. Replicates the viral genomic RNA on the surface of intracellular membranes. May form linear arrays of subunits that propagate along a strong head-to-tail interaction called interface-I. Covalently attaches UMP to a tyrosine of VPg, which is used to prime RNA synthesis. The positive stranded RNA genome is first replicated at virus induced membranous vesicles, creating a dsRNA genomic replication form. This dsRNA is then used as template to synthesize positive stranded RNA genomes. ss(+)RNA genomes are either translated, replicated or encapsidated. Its function is as follows. Major viral protease that mediates proteolytic processing of the polyprotein. Cleaves host EIF5B, contributing to host translation shutoff. Also cleaves host PABPC1, contributing to host translation shutoff. Cleaves host NLRP1, triggers host N-glycine-mediated degradation of the autoinhibitory NLRP1 N-terminal fragment. The protein is Genome polyprotein of Echovirus 11 (strain Gregory).